Reading from the N-terminus, the 332-residue chain is Ribose-phosphate pyrophosphokinase (332 aa).

57 to 59 (DGE) is a binding site for ATP. The Mg(2+) site is built by His-150 and Asp-189. Lys-213 is a catalytic residue. D-ribose 5-phosphate is bound by residues Arg-215, Asp-239, and 243-247 (DTAGT).

The protein belongs to the ribose-phosphate pyrophosphokinase family. Class I subfamily. As to quaternary structure, homohexamer. It depends on Mg(2+) as a cofactor.

The protein localises to the cytoplasm. It carries out the reaction D-ribose 5-phosphate + ATP = 5-phospho-alpha-D-ribose 1-diphosphate + AMP + H(+). It functions in the pathway metabolic intermediate biosynthesis; 5-phospho-alpha-D-ribose 1-diphosphate biosynthesis; 5-phospho-alpha-D-ribose 1-diphosphate from D-ribose 5-phosphate (route I): step 1/1. In terms of biological role, involved in the biosynthesis of the central metabolite phospho-alpha-D-ribosyl-1-pyrophosphate (PRPP) via the transfer of pyrophosphoryl group from ATP to 1-hydroxyl of ribose-5-phosphate (Rib-5-P). The sequence is that of Ribose-phosphate pyrophosphokinase from Gloeobacter violaceus (strain ATCC 29082 / PCC 7421).